A 175-amino-acid polypeptide reads, in one-letter code: MLPSLGLPRLSWMLLSCLMLLSQIQGENSQKELPSARISCPSGSMAYRSHCYALFKTPKTWMDADIACQKRPSGHLVSVLSGAEESFVASLVRNNLNTQSDIWIGLHDPTEGSEANAGGWEWISNDVLNYVAWETDPAAISSPGYCGSLSRSSGYLKWRDHNCNLNLPYVCKFTD.

The signal sequence occupies residues 1–26; that stretch reads MLPSLGLPRLSWMLLSCLMLLSQIQG. Positions 27–37 are excised as a propeptide; the sequence is ENSQKELPSAR. Residues 38 to 173 form the C-type lectin domain; that stretch reads ISCPSGSMAY…NLNLPYVCKF (136 aa). 3 disulfides stabilise this stretch: Cys-40/Cys-51, Cys-68/Cys-171, and Cys-146/Cys-163.

In terms of assembly, cleaved to give an A chain and a B chain joined by a disulfide bond. As to expression, in pancreatic acinar cells.

The protein localises to the secreted. Its function is as follows. Might act as an inhibitor of spontaneous calcium carbonate precipitation. The protein is Lithostathine (PTP) of Bos taurus (Bovine).